The following is a 322-amino-acid chain: Phosphatidylglycerol--prolipoprotein diacylglyceryl transferase (322 aa).

Helical transmembrane passes span Pro-21–Leu-41, Gly-50–Gly-70, Asn-98–Phe-118, and Ile-123–Gly-143. Arg-144 is a binding site for a 1,2-diacyl-sn-glycero-3-phospho-(1'-sn-glycerol). 2 consecutive transmembrane segments (helical) span residues Val-191–Trp-211 and Ile-254–Gly-274. A disordered region spans residues Val-283 to Lys-322.

The protein belongs to the Lgt family.

It is found in the cell membrane. The enzyme catalyses L-cysteinyl-[prolipoprotein] + a 1,2-diacyl-sn-glycero-3-phospho-(1'-sn-glycerol) = an S-1,2-diacyl-sn-glyceryl-L-cysteinyl-[prolipoprotein] + sn-glycerol 1-phosphate + H(+). The protein operates within protein modification; lipoprotein biosynthesis (diacylglyceryl transfer). Functionally, catalyzes the transfer of the diacylglyceryl group from phosphatidylglycerol to the sulfhydryl group of the N-terminal cysteine of a prolipoprotein, the first step in the formation of mature lipoproteins. The polypeptide is Phosphatidylglycerol--prolipoprotein diacylglyceryl transferase (Corynebacterium efficiens (strain DSM 44549 / YS-314 / AJ 12310 / JCM 11189 / NBRC 100395)).